The sequence spans 234 residues: Large ribosomal subunit protein bL25 (234 aa).

The protein belongs to the bacterial ribosomal protein bL25 family. CTC subfamily. Part of the 50S ribosomal subunit; part of the 5S rRNA/L5/L18/L25 subcomplex. Contacts the 5S rRNA. Binds to the 5S rRNA independently of L5 and L18.

Functionally, this is one of the proteins that binds to the 5S RNA in the ribosome where it forms part of the central protuberance. This Rhodopseudomonas palustris (strain BisA53) protein is Large ribosomal subunit protein bL25.